We begin with the raw amino-acid sequence, 162 residues long: Protein archease (162 aa).

Ca(2+)-binding residues include Asp-34, Asp-161, and Ile-162.

This sequence belongs to the archease family. As to quaternary structure, component of the tRNA-splicing ligase complex.

Its function is as follows. Component of the tRNA-splicing ligase complex required to facilitate the enzymatic turnover of catalytic subunit RTCB. Together with ddx1, acts by facilitating the guanylylation of RTCB, a key intermediate step in tRNA ligation. This is Protein archease (zbtb8os) from Danio rerio (Zebrafish).